The primary structure comprises 586 residues: Aspartate--tRNA ligase (586 aa).

Glu-171 contacts L-aspartate. Positions 195–198 are aspartate; that stretch reads QLFK. Arg-217 provides a ligand contact to L-aspartate. ATP-binding positions include 217 to 219 and Gln-226; that span reads RDE. His-448 lines the L-aspartate pocket. Position 482 (Glu-482) interacts with ATP. L-aspartate is bound at residue Arg-489. 534–537 provides a ligand contact to ATP; it reads GLDR.

It belongs to the class-II aminoacyl-tRNA synthetase family. Type 1 subfamily. As to quaternary structure, homodimer.

The protein localises to the cytoplasm. It catalyses the reaction tRNA(Asp) + L-aspartate + ATP = L-aspartyl-tRNA(Asp) + AMP + diphosphate. Its function is as follows. Catalyzes the attachment of L-aspartate to tRNA(Asp) in a two-step reaction: L-aspartate is first activated by ATP to form Asp-AMP and then transferred to the acceptor end of tRNA(Asp). The sequence is that of Aspartate--tRNA ligase from Buchnera aphidicola subsp. Acyrthosiphon pisum (strain APS) (Acyrthosiphon pisum symbiotic bacterium).